The primary structure comprises 280 residues: Energy-coupling factor transporter ATP-binding protein EcfA1 (280 aa).

An ABC transporter domain is found at 6–241 (IELKNVTFRY…GDELLDLGLD (236 aa)). ATP is bound at residue 41–48 (GHNGSGKS).

This sequence belongs to the ABC transporter superfamily. Energy-coupling factor EcfA family. As to quaternary structure, forms a stable energy-coupling factor (ECF) transporter complex composed of 2 membrane-embedded substrate-binding proteins (S component), 2 ATP-binding proteins (A component) and 2 transmembrane proteins (T component).

It is found in the cell membrane. Functionally, ATP-binding (A) component of a common energy-coupling factor (ECF) ABC-transporter complex. Unlike classic ABC transporters this ECF transporter provides the energy necessary to transport a number of different substrates. In Streptococcus mutans serotype c (strain ATCC 700610 / UA159), this protein is Energy-coupling factor transporter ATP-binding protein EcfA1.